We begin with the raw amino-acid sequence, 522 residues long: Maturase K (522 aa).

It belongs to the intron maturase 2 family. MatK subfamily.

The protein resides in the plastid. The protein localises to the chloroplast. Its function is as follows. Usually encoded in the trnK tRNA gene intron. Probably assists in splicing its own and other chloroplast group II introns. This chain is Maturase K, found in Iris domestica (Leopard lily).